Here is a 147-residue protein sequence, read N- to C-terminus: Plasminogen receptor (KT) (147 aa).

Residues M1–E52 are Extracellular-facing. Residues F53–I73 traverse the membrane as a helical segment. Topologically, residues K74–P78 are cytoplasmic. Residues A79–Y99 form a helical membrane-spanning segment. The Extracellular portion of the chain corresponds to G100–K147.

As to quaternary structure, interacts with PLAT and PLAUR. In terms of tissue distribution, expressed in peripheral blood cells and monocytes. Expressed in adrenal medulla.

It localises to the cell membrane. Its function is as follows. Receptor for plasminogen. Regulates urokinase plasminogen activator-dependent and stimulates tissue-type plasminogen activator-dependent cell surface plasminogen activation. Proposed to be part of a local catecholaminergic cell plasminogen activation system that regulates neuroendocrine prohormone processing. Involved in regulation of inflammatory response; regulates monocyte chemotactic migration and matrix metalloproteinase activation, such as of MMP2 and MMP9. In Homo sapiens (Human), this protein is Plasminogen receptor (KT) (PLGRKT).